The sequence spans 424 residues: CinA-like protein (424 aa).

Belongs to the CinA family.

This is CinA-like protein from Shewanella putrefaciens (strain CN-32 / ATCC BAA-453).